The chain runs to 244 residues: Probable transcriptional regulatory protein TT_C0469 (244 aa).

Belongs to the TACO1 family.

It localises to the cytoplasm. This chain is Probable transcriptional regulatory protein TT_C0469, found in Thermus thermophilus (strain ATCC BAA-163 / DSM 7039 / HB27).